The chain runs to 1989 residues: Exophilin-5 (1989 aa).

The RabBD domain maps to 7 to 63 (AFDFSFLNDEEARKILQVLERNEELQRAEKDRISKLQKTKRDIRWLQGVTGEWFEEI). Disordered regions lie at residues 93–117 (NDPI…PFSS) and 348–391 (TQSK…FLRA). Composition is skewed to polar residues over residues 100–111 (TSRSKNVTNQKK) and 359–376 (HQQS…WNRS). Residues 377 to 389 (DSSRDRENQEEFL) are compositionally biased toward basic and acidic residues. Serine 603 bears the Phosphoserine mark. Disordered regions lie at residues 631-651 (FSQI…NPTV), 806-827 (STAS…RTDQ), and 882-933 (AALP…NQKN). Polar residues predominate over residues 641 to 651 (PQSPNLQNPTV). Residues serine 806 and serine 809 each carry the phosphoserine modification. Residues 891 to 909 (KNSSLDAPVVPSTTVFSRR) are compositionally biased toward polar residues. Positions 910 to 927 (SPSDKDPSLGEREEKDNA) are enriched in basic and acidic residues. Residues serine 1028 and serine 1086 each carry the phosphoserine modification. Disordered stretches follow at residues 1094–1113 (EATE…VRKG), 1124–1152 (SCPS…ASEL), and 1365–1493 (EIFS…TNCQ). Positions 1098–1110 (RMTNVKSSGSTSV) are enriched in polar residues. The residue at position 1124 (serine 1124) is a Phosphoserine. The segment covering 1379–1390 (SENKKERGKKLQ) has biased composition (basic and acidic residues). A compositionally biased stretch (low complexity) spans 1416–1431 (SINSSNSGPSSLPALS). Residues 1434 to 1447 (NIGNSQTRRSSWEC) are compositionally biased toward polar residues. Residue serine 1505 is modified to Phosphoserine. Disordered stretches follow at residues 1521 to 1590 (EETQ…NRSS) and 1644 to 1737 (PEPT…PITF). Composition is skewed to basic and acidic residues over residues 1551-1560 (ESRKAEDEMQ), 1573-1589 (NKNK…ENRS), and 1658-1670 (RLSE…KKSE). A compositionally biased stretch (polar residues) spans 1685 to 1709 (THVSNQKSNSISQRHQNEFKNVSES). Phosphoserine occurs at positions 1753, 1768, 1821, and 1851. Residues 1921-1989 (FLKDDLRNPP…LDENDKESEL (69 aa)) form a disordered region. Positions 1933-1943 (SESLSSNSPSS) are enriched in low complexity. The segment covering 1959 to 1989 (YEDDPVDSDCDTDTTTDDEYYLDENDKESEL) has biased composition (acidic residues).

As to quaternary structure, interacts with RAB27A. Expressed in keratinocytes.

May act as Rab effector protein and play a role in vesicle trafficking. The protein is Exophilin-5 of Homo sapiens (Human).